The primary structure comprises 371 residues: Queuine tRNA-ribosyltransferase (371 aa).

Aspartate 90 functions as the Proton acceptor in the catalytic mechanism. Residues 90–94 (DSGGF), aspartate 144, glutamine 189, and glycine 215 contribute to the substrate site. The tract at residues 246–252 (GVGTPEN) is RNA binding. Aspartate 265 (nucleophile) is an active-site residue. An RNA binding; important for wobble base 34 recognition region spans residues 270 to 274 (TRNAR). Zn(2+) contacts are provided by cysteine 303, cysteine 305, cysteine 308, and histidine 334.

It belongs to the queuine tRNA-ribosyltransferase family. In terms of assembly, homodimer. Within each dimer, one monomer is responsible for RNA recognition and catalysis, while the other monomer binds to the replacement base PreQ1. The cofactor is Zn(2+).

It catalyses the reaction 7-aminomethyl-7-carbaguanine + guanosine(34) in tRNA = 7-aminomethyl-7-carbaguanosine(34) in tRNA + guanine. Its pathway is tRNA modification; tRNA-queuosine biosynthesis. Catalyzes the base-exchange of a guanine (G) residue with the queuine precursor 7-aminomethyl-7-deazaguanine (PreQ1) at position 34 (anticodon wobble position) in tRNAs with GU(N) anticodons (tRNA-Asp, -Asn, -His and -Tyr). Catalysis occurs through a double-displacement mechanism. The nucleophile active site attacks the C1' of nucleotide 34 to detach the guanine base from the RNA, forming a covalent enzyme-RNA intermediate. The proton acceptor active site deprotonates the incoming PreQ1, allowing a nucleophilic attack on the C1' of the ribose to form the product. After dissociation, two additional enzymatic reactions on the tRNA convert PreQ1 to queuine (Q), resulting in the hypermodified nucleoside queuosine (7-(((4,5-cis-dihydroxy-2-cyclopenten-1-yl)amino)methyl)-7-deazaguanosine). This is Queuine tRNA-ribosyltransferase from Helicobacter acinonychis (strain Sheeba).